The following is a 76-amino-acid chain: U7-lycotoxin-Ls1b (76 aa).

The N-terminal stretch at 1 to 22 (MKLISFTGLALLLIVSLIDVEA) is a signal peptide. A propeptide spanning residues 23–26 (QNEG) is cleaved from the precursor.

It belongs to the neurotoxin 19 (CSTX) family. 07 (U7-Lctx) subfamily. Post-translationally, contains 4 disulfide bonds. In terms of tissue distribution, expressed by the venom gland.

The protein resides in the secreted. This is U7-lycotoxin-Ls1b from Lycosa singoriensis (Wolf spider).